The chain runs to 399 residues: Acetylornithine aminotransferase (399 aa).

Pyridoxal 5'-phosphate contacts are provided by residues 102–103 and F135; that span reads GA. Residue R138 participates in N(2)-acetyl-L-ornithine binding. 220–223 provides a ligand contact to pyridoxal 5'-phosphate; the sequence is DEIQ. N6-(pyridoxal phosphate)lysine is present on K249. S277 contacts N(2)-acetyl-L-ornithine. Residue T278 coordinates pyridoxal 5'-phosphate.

It belongs to the class-III pyridoxal-phosphate-dependent aminotransferase family. ArgD subfamily. As to quaternary structure, homodimer. It depends on pyridoxal 5'-phosphate as a cofactor.

It localises to the cytoplasm. It carries out the reaction N(2)-acetyl-L-ornithine + 2-oxoglutarate = N-acetyl-L-glutamate 5-semialdehyde + L-glutamate. Its pathway is amino-acid biosynthesis; L-arginine biosynthesis; N(2)-acetyl-L-ornithine from L-glutamate: step 4/4. This Oceanobacillus iheyensis (strain DSM 14371 / CIP 107618 / JCM 11309 / KCTC 3954 / HTE831) protein is Acetylornithine aminotransferase.